Reading from the N-terminus, the 518-residue chain is Arp2/3 complex-activating protein rickA (518 aa).

Positions 310–518 (SAAQLQSAET…ERNAKQSQQR (209 aa)) are disordered. Composition is skewed to pro residues over residues 344 to 354 (TPPPAPPPPMP) and 382 to 401 (VPPP…PPPV). The segment covering 418–430 (QPRPAVDTTNLMK) has biased composition (polar residues). In terms of domain architecture, WH2 spans 424-441 (DTTNLMKQIQGGFNLKKI). Residues 439–461 (KKIEYGEDGKPIPKNKEDTKETS) show a composition bias toward basic and acidic residues. The span at 488–498 (GTDSGWASDVS) shows a compositional bias: polar residues.

In terms of assembly, homodimer.

It is found in the cell surface. Its function is as follows. Recruits and activates the Arp2/3 complex, which in turn leads to actin polymerization, promoting Rickettsia motility during infection. This chain is Arp2/3 complex-activating protein rickA (rickA), found in Rickettsia bellii (strain RML369-C).